Here is a 119-residue protein sequence, read N- to C-terminus: DNA-binding protein Maeo_0998 (119 aa).

A compositionally biased stretch (basic and acidic residues) spans 1–11 (MDIEEIKRQKM). The interval 1 to 36 (MDIEEIKRQKMMELQQQQAQGAPNPEEIQQQQEQER) is disordered. The span at 15-32 (QQQQAQGAPNPEEIQQQQ) shows a compositional bias: low complexity.

The protein belongs to the PDCD5 family.

The chain is DNA-binding protein Maeo_0998 from Methanococcus aeolicus (strain ATCC BAA-1280 / DSM 17508 / OCM 812 / Nankai-3).